Consider the following 209-residue polypeptide: Ribosomal RNA large subunit methyltransferase E (209 aa).

S-adenosyl-L-methionine contacts are provided by Gly63, Trp65, Asp83, Asp99, and Asp124. The Proton acceptor role is filled by Lys164.

Belongs to the class I-like SAM-binding methyltransferase superfamily. RNA methyltransferase RlmE family.

The protein localises to the cytoplasm. The catalysed reaction is uridine(2552) in 23S rRNA + S-adenosyl-L-methionine = 2'-O-methyluridine(2552) in 23S rRNA + S-adenosyl-L-homocysteine + H(+). Specifically methylates the uridine in position 2552 of 23S rRNA at the 2'-O position of the ribose in the fully assembled 50S ribosomal subunit. This chain is Ribosomal RNA large subunit methyltransferase E, found in Shewanella baltica (strain OS223).